The following is a 153-amino-acid chain: Xanthine-guanine phosphoribosyltransferase (153 aa).

5-phospho-alpha-D-ribose 1-diphosphate-binding positions include 37-38 and 89-97; these read RG and DDLVDTGNT. Asp-90 contributes to the Mg(2+) binding site. Guanine is bound by residues Asp-93 and Ile-136. Asp-93 and Ile-136 together coordinate xanthine. GMP is bound by residues 93 to 97 and 135 to 136; these read DTGNT and WI.

This sequence belongs to the purine/pyrimidine phosphoribosyltransferase family. XGPT subfamily. In terms of assembly, homotetramer. Mg(2+) is required as a cofactor.

It localises to the cell inner membrane. The enzyme catalyses GMP + diphosphate = guanine + 5-phospho-alpha-D-ribose 1-diphosphate. It carries out the reaction XMP + diphosphate = xanthine + 5-phospho-alpha-D-ribose 1-diphosphate. It catalyses the reaction IMP + diphosphate = hypoxanthine + 5-phospho-alpha-D-ribose 1-diphosphate. It functions in the pathway purine metabolism; GMP biosynthesis via salvage pathway; GMP from guanine: step 1/1. Its pathway is purine metabolism; XMP biosynthesis via salvage pathway; XMP from xanthine: step 1/1. In terms of biological role, purine salvage pathway enzyme that catalyzes the transfer of the ribosyl-5-phosphate group from 5-phospho-alpha-D-ribose 1-diphosphate (PRPP) to the N9 position of the 6-oxopurines guanine and xanthine to form the corresponding ribonucleotides GMP (guanosine 5'-monophosphate) and XMP (xanthosine 5'-monophosphate), with the release of PPi. To a lesser extent, also acts on hypoxanthine. This Pasteurella multocida (strain Pm70) protein is Xanthine-guanine phosphoribosyltransferase.